A 98-amino-acid chain; its full sequence is NADH-ubiquinone oxidoreductase chain 4L (98 aa).

3 helical membrane passes run Met-1–Leu-21, Ser-29–Leu-49, and Ile-61–Val-81.

Belongs to the complex I subunit 4L family. Core subunit of respiratory chain NADH dehydrogenase (Complex I) which is composed of 45 different subunits.

Its subcellular location is the mitochondrion inner membrane. It catalyses the reaction a ubiquinone + NADH + 5 H(+)(in) = a ubiquinol + NAD(+) + 4 H(+)(out). In terms of biological role, core subunit of the mitochondrial membrane respiratory chain NADH dehydrogenase (Complex I) which catalyzes electron transfer from NADH through the respiratory chain, using ubiquinone as an electron acceptor. Part of the enzyme membrane arm which is embedded in the lipid bilayer and involved in proton translocation. This Choloepus didactylus (Southern two-toed sloth) protein is NADH-ubiquinone oxidoreductase chain 4L (MT-ND4L).